The primary structure comprises 77 residues: Small ribosomal subunit protein bS16 (77 aa).

The protein belongs to the bacterial ribosomal protein bS16 family.

This is Small ribosomal subunit protein bS16 from Wolinella succinogenes (strain ATCC 29543 / DSM 1740 / CCUG 13145 / JCM 31913 / LMG 7466 / NCTC 11488 / FDC 602W) (Vibrio succinogenes).